Here is a 131-residue protein sequence, read N- to C-terminus: D-ribose pyranase (131 aa).

H20 functions as the Proton donor in the catalytic mechanism. Residues D28, H98, and 120–122 (YSN) contribute to the substrate site.

Belongs to the RbsD / FucU family. RbsD subfamily. As to quaternary structure, homodecamer.

Its subcellular location is the cytoplasm. It catalyses the reaction beta-D-ribopyranose = beta-D-ribofuranose. It functions in the pathway carbohydrate metabolism; D-ribose degradation; D-ribose 5-phosphate from beta-D-ribopyranose: step 1/2. Catalyzes the interconversion of beta-pyran and beta-furan forms of D-ribose. The sequence is that of D-ribose pyranase from Pediococcus pentosaceus (strain ATCC 25745 / CCUG 21536 / LMG 10740 / 183-1w).